The sequence spans 293 residues: HTH-type transcriptional regulator ArgP (293 aa).

Residues 4–60 enclose the HTH lysR-type domain; the sequence is PDYRTLQALDAVIRERGFERAAQKLCITQSAVSQRIKQLENLFGQPLLVRTIPPHPT. Residues 21–40 constitute a DNA-binding region (H-T-H motif); that stretch reads FERAAQKLCITQSAVSQRIK.

The protein belongs to the LysR transcriptional regulatory family. Homodimer.

Its function is as follows. Controls the transcription of genes involved in arginine and lysine metabolism. The sequence is that of HTH-type transcriptional regulator ArgP from Sodalis glossinidius (strain morsitans).